Reading from the N-terminus, the 90-residue chain is Small ribosomal subunit protein bS16 (90 aa).

It belongs to the bacterial ribosomal protein bS16 family.

The chain is Small ribosomal subunit protein bS16 from Streptococcus thermophilus (strain CNRZ 1066).